The primary structure comprises 571 residues: Proline--tRNA ligase (571 aa).

The protein belongs to the class-II aminoacyl-tRNA synthetase family. ProS type 1 subfamily. Homodimer.

The protein localises to the cytoplasm. The enzyme catalyses tRNA(Pro) + L-proline + ATP = L-prolyl-tRNA(Pro) + AMP + diphosphate. Functionally, catalyzes the attachment of proline to tRNA(Pro) in a two-step reaction: proline is first activated by ATP to form Pro-AMP and then transferred to the acceptor end of tRNA(Pro). As ProRS can inadvertently accommodate and process non-cognate amino acids such as alanine and cysteine, to avoid such errors it has two additional distinct editing activities against alanine. One activity is designated as 'pretransfer' editing and involves the tRNA(Pro)-independent hydrolysis of activated Ala-AMP. The other activity is designated 'posttransfer' editing and involves deacylation of mischarged Ala-tRNA(Pro). The misacylated Cys-tRNA(Pro) is not edited by ProRS. This Buchnera aphidicola subsp. Schizaphis graminum (strain Sg) protein is Proline--tRNA ligase.